We begin with the raw amino-acid sequence, 284 residues long: 3-methyl-2-oxobutanoate hydroxymethyltransferase 2 (284 aa).

Asp49 and Asp88 together coordinate Mg(2+). 3-methyl-2-oxobutanoate is bound by residues Asp49 to Ser50, Asp88, and Lys118. Glu120 provides a ligand contact to Mg(2+). Glu187 (proton acceptor) is an active-site residue.

Belongs to the PanB family. As to quaternary structure, homodecamer; pentamer of dimers. Mg(2+) is required as a cofactor.

It localises to the cytoplasm. It catalyses the reaction 3-methyl-2-oxobutanoate + (6R)-5,10-methylene-5,6,7,8-tetrahydrofolate + H2O = 2-dehydropantoate + (6S)-5,6,7,8-tetrahydrofolate. Its pathway is cofactor biosynthesis; (R)-pantothenate biosynthesis; (R)-pantoate from 3-methyl-2-oxobutanoate: step 1/2. Functionally, catalyzes the reversible reaction in which hydroxymethyl group from 5,10-methylenetetrahydrofolate is transferred onto alpha-ketoisovalerate to form ketopantoate. The chain is 3-methyl-2-oxobutanoate hydroxymethyltransferase 2 from Burkholderia cenocepacia (strain HI2424).